A 350-amino-acid chain; its full sequence is GTPase Obg (350 aa).

The Obg domain maps to 1–159; that stretch reads MKFLDQAKIY…RWIWLRLKLI (159 aa). The region spanning 160 to 328 is the OBG-type G domain; sequence ADVGLVGLPN…VLRLLQDRVT (169 aa). GTP is bound by residues 166-173, 191-195, 213-216, 280-283, and 309-311; these read GLPNAGKS, FTTLH, DIPG, NKID, and SGV. S173 and T193 together coordinate Mg(2+). A disordered region spans residues 331 to 350; sequence REAARDAAPPQAAAGREETA.

Belongs to the TRAFAC class OBG-HflX-like GTPase superfamily. OBG GTPase family. As to quaternary structure, monomer. It depends on Mg(2+) as a cofactor.

The protein resides in the cytoplasm. Its function is as follows. An essential GTPase which binds GTP, GDP and possibly (p)ppGpp with moderate affinity, with high nucleotide exchange rates and a fairly low GTP hydrolysis rate. Plays a role in control of the cell cycle, stress response, ribosome biogenesis and in those bacteria that undergo differentiation, in morphogenesis control. This is GTPase Obg from Gluconacetobacter diazotrophicus (strain ATCC 49037 / DSM 5601 / CCUG 37298 / CIP 103539 / LMG 7603 / PAl5).